Reading from the N-terminus, the 234-residue chain is Phosphoribosylaminoimidazole-succinocarboxamide synthase (234 aa).

Belongs to the SAICAR synthetase family.

It carries out the reaction 5-amino-1-(5-phospho-D-ribosyl)imidazole-4-carboxylate + L-aspartate + ATP = (2S)-2-[5-amino-1-(5-phospho-beta-D-ribosyl)imidazole-4-carboxamido]succinate + ADP + phosphate + 2 H(+). The protein operates within purine metabolism; IMP biosynthesis via de novo pathway; 5-amino-1-(5-phospho-D-ribosyl)imidazole-4-carboxamide from 5-amino-1-(5-phospho-D-ribosyl)imidazole-4-carboxylate: step 1/2. In Streptococcus agalactiae serotype III (strain NEM316), this protein is Phosphoribosylaminoimidazole-succinocarboxamide synthase.